The chain runs to 235 residues: Venom metalloproteinase antarease-like TserMP_B (235 aa).

A Peptidase M12B domain is found at 4–233 (IVVEYYIVTD…PTASCIFQQC (230 aa)). Cysteine 137 and cysteine 228 are oxidised to a cystine. Histidine 161 is a binding site for Zn(2+). Residue glutamate 162 is part of the active site. 2 residues coordinate Zn(2+): histidine 165 and histidine 171.

It belongs to the venom metalloproteinase (M12B) family. It depends on Zn(2+) as a cofactor. As to expression, expressed by the venom gland.

The protein resides in the secreted. Its activity is regulated as follows. Inhibited by EDTA. Functionally, acts as a metalloprotease. Penetrates intact tissue and specifically cleaves the vesicle-associated membrane protein 2 (VAMP2) (part of the SNARE complex) involved in pancreatic secretion, thus disrupting the normal vesicular traffic. The protein is Venom metalloproteinase antarease-like TserMP_B of Tityus serrulatus (Brazilian scorpion).